The primary structure comprises 54 residues: Small ribosomal subunit protein uS14 (54 aa).

Residues Cys19, Cys22, Cys37, and Cys40 each coordinate Zn(2+).

It belongs to the universal ribosomal protein uS14 family. Zinc-binding uS14 subfamily. In terms of assembly, part of the 30S ribosomal subunit. Zn(2+) serves as cofactor.

Functionally, binds 16S rRNA, required for the assembly of 30S particles. This chain is Small ribosomal subunit protein uS14, found in Sulfolobus acidocaldarius (strain ATCC 33909 / DSM 639 / JCM 8929 / NBRC 15157 / NCIMB 11770).